The following is a 379-amino-acid chain: DNA replication and repair protein RecF (379 aa).

34 to 41 (GDNGAGKT) contributes to the ATP binding site.

This sequence belongs to the RecF family.

It is found in the cytoplasm. Its function is as follows. The RecF protein is involved in DNA metabolism; it is required for DNA replication and normal SOS inducibility. RecF binds preferentially to single-stranded, linear DNA. It also seems to bind ATP. In Mesorhizobium japonicum (strain LMG 29417 / CECT 9101 / MAFF 303099) (Mesorhizobium loti (strain MAFF 303099)), this protein is DNA replication and repair protein RecF.